A 258-amino-acid chain; its full sequence is Sec-independent protein translocase protein TatC (258 aa).

The Cytoplasmic portion of the chain corresponds to 2 to 23 (SVEDTQPLITHLIELRKRLLNC). Residues 24 to 44 (IIAVIVIFLCLVYFANDIYHL) traverse the membrane as a helical segment. Over 45-75 (VSAPLIKQLPQGSTMIATDVASPFFTPIKLT) the chain is Periplasmic. The helical transmembrane segment at 76-96 (FMVSLILSAPVILYQVWAFIA) threads the bilayer. Over 97–115 (PALYKHERRLVVPLLVSSS) the chain is Cytoplasmic. Residues 116–136 (LLFYIGMAFAYFVVFPLAFGF) traverse the membrane as a helical segment. The Periplasmic segment spans residues 137–156 (LANTAPEGVQVSTDIASYLS). A helical transmembrane segment spans residues 157-177 (FVMALFMAFGVSFEVPVAIVL). Over 178 to 192 (LCWMGITSPEDLRKK) the chain is Cytoplasmic. The helical transmembrane segment at 193 to 210 (RPYVLVGAFVVGMLLTPP) threads the bilayer. A topological domain (periplasmic) is located at residue Asp211. A helical transmembrane segment spans residues 212 to 232 (VFSQTLLAIPMYCLFEIGVFF). At 233 to 258 (SRFYVGKGRNREEENDAEAESEKTEE) the chain is on the cytoplasmic side.

The protein belongs to the TatC family. In terms of assembly, the Tat system comprises two distinct complexes: a TatABC complex, containing multiple copies of TatA, TatB and TatC subunits, and a separate TatA complex, containing only TatA subunits. Substrates initially bind to the TatABC complex, which probably triggers association of the separate TatA complex to form the active translocon. TatC can form a distinct, stable, multimeric complex independent of TatA and TatB. Each of TatA, TatB and TatC are able to interact in pairs without the third partner. Interacts with the signal sequence of DmsA and DmsD.

The protein resides in the cell inner membrane. In terms of biological role, part of the twin-arginine translocation (Tat) system that transports large folded proteins containing a characteristic twin-arginine motif in their signal peptide across membranes. Together with TatB, TatC is part of a receptor directly interacting with Tat signal peptides. This is Sec-independent protein translocase protein TatC from Escherichia coli (strain K12).